Reading from the N-terminus, the 184-residue chain is dTTP/UTP pyrophosphatase (184 aa).

Residue Asp-65 is the Proton acceptor of the active site.

It belongs to the Maf family. YhdE subfamily. It depends on a divalent metal cation as a cofactor.

Its subcellular location is the cytoplasm. It carries out the reaction dTTP + H2O = dTMP + diphosphate + H(+). The enzyme catalyses UTP + H2O = UMP + diphosphate + H(+). In terms of biological role, nucleoside triphosphate pyrophosphatase that hydrolyzes dTTP and UTP. May have a dual role in cell division arrest and in preventing the incorporation of modified nucleotides into cellular nucleic acids. The chain is dTTP/UTP pyrophosphatase from Thermococcus onnurineus (strain NA1).